The chain runs to 1004 residues: Translation initiation factor IF-2 (1004 aa).

The disordered stretch occupies residues 36–393; it reads SSTIEPPVVK…RQKRNEYESM (358 aa). 2 stretches are compositionally biased toward low complexity: residues 62–157 and 173–183; these read AAKP…AKPA and AAKPGAEAPRP. Composition is skewed to pro residues over residues 184–196 and 219–236; these read GGMP…PAPK and PRPG…PGGG. 2 stretches are compositionally biased toward gly residues: residues 237 to 249 and 261 to 277; these read PRPQ…GGQR and GNRG…GPRP. Residues 279–303 show a composition bias toward low complexity; it reads GGPRPQGGSRPQGGSAQGAQGAPSQ. The span at 330–373 shows a compositional bias: gly residues; the sequence is GKGGRGGQAGGGAGGGFNRGGGTGGGAGRGGRRGGTAGAFGRPG. Residues 377 to 386 show a composition bias toward basic residues; it reads RRGRKSKRQK. The tr-type G domain occupies 499 to 671; it reads KRPPVVTVMG…VCLTADAELD (173 aa). Positions 508–515 are G1; sequence GHVDHGKT. Residue 508–515 coordinates GTP; the sequence is GHVDHGKT. The interval 533-537 is G2; the sequence is GITQG. The segment at 558-561 is G3; sequence DTPG. Residues 558–562 and 612–615 contribute to the GTP site; these read DTPGH and NKID. The G4 stretch occupies residues 612–615; sequence NKID. The interval 648–650 is G5; that stretch reads SAK.

The protein belongs to the TRAFAC class translation factor GTPase superfamily. Classic translation factor GTPase family. IF-2 subfamily.

The protein resides in the cytoplasm. In terms of biological role, one of the essential components for the initiation of protein synthesis. Protects formylmethionyl-tRNA from spontaneous hydrolysis and promotes its binding to the 30S ribosomal subunits. Also involved in the hydrolysis of GTP during the formation of the 70S ribosomal complex. In Corynebacterium glutamicum (strain ATCC 13032 / DSM 20300 / JCM 1318 / BCRC 11384 / CCUG 27702 / LMG 3730 / NBRC 12168 / NCIMB 10025 / NRRL B-2784 / 534), this protein is Translation initiation factor IF-2.